We begin with the raw amino-acid sequence, 539 residues long: Probable protein kinase UbiB (539 aa).

Residues 23–43 form a helical membrane-spanning segment; it reads DLLFALPLPWWMLAVRFVLPW. The Protein kinase domain maps to 125–492; that stretch reads RFDETPLASA…WHDRKDEPVL (368 aa). ATP contacts are provided by residues 131–139 and lysine 153; that span reads LASASVAQV. Aspartate 288 acts as the Proton acceptor in catalysis. Helical transmembrane passes span 494-514 and 517-537; these read LIGA…SEAA and LLTL…YLIV.

Belongs to the ABC1 family. UbiB subfamily.

The protein localises to the cell inner membrane. The protein operates within cofactor biosynthesis; ubiquinone biosynthesis [regulation]. In terms of biological role, is probably a protein kinase regulator of UbiI activity which is involved in aerobic coenzyme Q (ubiquinone) biosynthesis. In Pseudomonas syringae pv. tomato (strain ATCC BAA-871 / DC3000), this protein is Probable protein kinase UbiB.